The following is a 410-amino-acid chain: MVVQNSADAGDMRAGVQLEPFLHQVGGHMSVMKYDEHTVCKPLVSREQRFYESLPLAMKRFTPQYKGTVTVHLWKDSTGHLSLVANPVKESQEPFKVSTESAAVAIWQTLQQTTGSNGSDCTLAQWPHAQLARSPKESPAKALLRSEPHLNTPAFSLVEDTNGNQVERKSFNPWGLQCHQAHLTRLCSEYPENKRHRFLLLENVVSQYTHPCVLDLKMGTRQHGDDASEEKKARHMRKCAQSTSACLGVRICGMQVYQTDKKYFLCKDKYYGRKLSVEGFRQALYQFLHNGSHLRRELLEPILHQLRALLSVIRSQSSYRFYSSSLLVIYDGQEPPERAPGSPHPHEAPQAAHGSSPGGLTKVDIRMIDFAHTTYKGYWNEHTTYDGPDPGYIFGLENLIRILQDIQEGE.

211–219 (PCVLDLKMG) contributes to the substrate binding site. Residues 333–358 (QEPPERAPGSPHPHEAPQAAHGSSPG) form a disordered region.

Belongs to the inositol phosphokinase (IPK) family. As to expression, detected in brain.

The protein localises to the cytoplasm. The enzyme catalyses 1D-myo-inositol hexakisphosphate + ATP = 5-diphospho-1D-myo-inositol 1,2,3,4,6-pentakisphosphate + ADP. The catalysed reaction is 1-diphospho-1D-myo-inositol 2,3,4,5,6-pentakisphosphate + ATP + H(+) = 1,5-bis(diphospho)-1D-myo-inositol 2,3,4,6-tetrakisphosphate + ADP. Converts inositol hexakisphosphate (InsP6) to diphosphoinositol pentakisphosphate (InsP7/PP-InsP5). Converts 1,3,4,5,6-pentakisphosphate (InsP5) to PP-InsP4. This chain is Inositol hexakisphosphate kinase 3 (IP6K3), found in Homo sapiens (Human).